A 475-amino-acid polypeptide reads, in one-letter code: UDP-N-acetylmuramoylalanine--D-glutamate ligase (475 aa).

130–136 is a binding site for ATP; that stretch reads GTNGKTT.

The protein belongs to the MurCDEF family.

Its subcellular location is the cytoplasm. It carries out the reaction UDP-N-acetyl-alpha-D-muramoyl-L-alanine + D-glutamate + ATP = UDP-N-acetyl-alpha-D-muramoyl-L-alanyl-D-glutamate + ADP + phosphate + H(+). Its pathway is cell wall biogenesis; peptidoglycan biosynthesis. Functionally, cell wall formation. Catalyzes the addition of glutamate to the nucleotide precursor UDP-N-acetylmuramoyl-L-alanine (UMA). The sequence is that of UDP-N-acetylmuramoylalanine--D-glutamate ligase from Corynebacterium diphtheriae (strain ATCC 700971 / NCTC 13129 / Biotype gravis).